A 353-amino-acid chain; its full sequence is sn-glycerol-3-phosphate import ATP-binding protein UgpC (353 aa).

The ABC transporter domain maps to 4–234 (ILLNDVRKSY…PASEFVAGFI (231 aa)). An ATP-binding site is contributed by 36–43 (GPSGCGKS).

It belongs to the ABC transporter superfamily. sn-glycerol-3-phosphate importer (TC 3.A.1.1.3) family. In terms of assembly, the complex is composed of two ATP-binding proteins (UgpC), two transmembrane proteins (UgpA and UgpE) and a solute-binding protein (UgpB).

It localises to the cell inner membrane. The enzyme catalyses sn-glycerol 3-phosphate(out) + ATP + H2O = sn-glycerol 3-phosphate(in) + ADP + phosphate + H(+). Its function is as follows. Part of the ABC transporter complex UgpBAEC involved in sn-glycerol-3-phosphate (G3P) import. Responsible for energy coupling to the transport system. This Paracoccus denitrificans (strain Pd 1222) protein is sn-glycerol-3-phosphate import ATP-binding protein UgpC.